A 276-amino-acid polypeptide reads, in one-letter code: Undecaprenyl-diphosphatase 2 (276 aa).

8 helical membrane-spanning segments follow: residues 1–21 (MSLW…LFPV), 44–64 (QLLP…LWYF), 87–107 (GHLM…GLLL), 114–134 (VFHD…LLWL), 150–170 (MTFK…IPGF), 190–210 (AAEF…VLEL), 222–242 (DALL…RFLM), and 251–271 (LASF…WFML).

It belongs to the UppP family.

The protein localises to the cell inner membrane. It carries out the reaction di-trans,octa-cis-undecaprenyl diphosphate + H2O = di-trans,octa-cis-undecaprenyl phosphate + phosphate + H(+). Catalyzes the dephosphorylation of undecaprenyl diphosphate (UPP). Confers resistance to bacitracin. This Burkholderia orbicola (strain AU 1054) protein is Undecaprenyl-diphosphatase 2.